Reading from the N-terminus, the 345-residue chain is Protein GAMETE CELL DEFECTIVE 1, mitochondrial (345 aa).

The N-terminal 43 residues, 1–43 (MLALRKTLLHGRLPAAPPAAAAAAIASRIPALLRRLSSSPGDG), are a transit peptide targeting the mitochondrion. The segment at 36–81 (LSSSPGDGQGGDEWGSSWSTGITKEHFDGSDAAVGRPVTSPSKPVS) is disordered.

Expressed in roots, stems, leaves and florets.

It localises to the mitochondrion. Functionally, essential for fertility (male and female gametophyte functions and development). Required for the integrity of female gametic mitochondria. Involved in embryo apical-basal patterning, and particularly dorsal-ventral patterning, during early embryogenesis, and endosperm free nucleus positioning and development as well as early endosperm development, probably by modulating the expression pattern of related genes (e.g. AL1, MYB3/AL2, CYP78A13/GE, PNH1, HAZ1, MPK6 and OSH1). Has function in triggering of endosperm programmed cell death (PCD) leading to syncytial endosperm cellularization and starchy endosperm cell maturation. Implicated in central vacuole dynamics necessary for microspore development leading to pollen production, and for pollen development and germination. This is Protein GAMETE CELL DEFECTIVE 1, mitochondrial from Oryza sativa subsp. japonica (Rice).